The chain runs to 444 residues: MAERKYFGTDGVRGKVGTFPITPDFALKLGWAAGKVLATQGSRTVLIGKDTRISGYMLESALEAGLAAAGLSAAFTGPMPTPAIAYLTRTFRAEAGIVISASHNPYYDNGIKFFSAQGTKLPDDVEEAIEAMLDEPMDCVESAELGRASRINDAVGRYIEFCKGTFPAHLSLENYKIVVDCAHGATYHIAPNVMRELGAEVIEIGAKPNGLNINEKCGATDIKALQEKVLEVKADVGLAYDGDGDRLIMVDHLGNKVDGDQVLFIIAREALRAGHLKGGVVGTLMSNMSLELALKQLGIPFVRANVGDRYVLEKMQEKGWLLGGENSGHIIILDKNTTGDGIIASLAVLSAMVQHNLSLNELASAVPLFPQVLINVRFAGGDNPLESAAVKAVAAEVEKRLAGKGRILLRKSGTEPLIRVMVECEDGALAQQCAEQIADVVRAN.

Ser102 (phosphoserine intermediate) is an active-site residue. Mg(2+) contacts are provided by Ser102, Asp241, Asp243, and Asp245. Position 102 is a phosphoserine (Ser102).

The protein belongs to the phosphohexose mutase family. Mg(2+) is required as a cofactor. Activated by phosphorylation.

It carries out the reaction alpha-D-glucosamine 1-phosphate = D-glucosamine 6-phosphate. Its function is as follows. Catalyzes the conversion of glucosamine-6-phosphate to glucosamine-1-phosphate. In Pasteurella multocida (strain Pm70), this protein is Phosphoglucosamine mutase.